Here is a 629-residue protein sequence, read N- to C-terminus: tRNA uridine 5-carboxymethylaminomethyl modification enzyme MnmG (629 aa).

13–18 lines the FAD pocket; that stretch reads GGGHAG. 273–287 contacts NAD(+); the sequence is GPRYCPSIEDKIHRF.

It belongs to the MnmG family. As to quaternary structure, homodimer. Heterotetramer of two MnmE and two MnmG subunits. The cofactor is FAD.

The protein localises to the cytoplasm. NAD-binding protein involved in the addition of a carboxymethylaminomethyl (cmnm) group at the wobble position (U34) of certain tRNAs, forming tRNA-cmnm(5)s(2)U34. The polypeptide is tRNA uridine 5-carboxymethylaminomethyl modification enzyme MnmG (Shewanella amazonensis (strain ATCC BAA-1098 / SB2B)).